The following is a 336-amino-acid chain: MTEPKDIVLKESEEVEGTPIEGPWLDEVSSLEEVLDYYERIGFQATHLGKAIEIWKKVEEKRARGEEVRVFLGYTSNIISSGLREIIAWLVKEGKVDVIVTTAGGIEEDFIKALKPFILGDWNVNDALMREKGINRIGNIFVPNDRYIEFEKYMIPFFERVLEIEKERGKPLTASEFIYEMGRFMDEKLGKEKEKSVIYWAYKRNVPIFCPAITDGSIGDMLYFFKEERGDRELIIDIANDIVKLNNLAVTAKETASIILGGSLPKHAIINANLFRGGTDYAIYVTTAIPWDGSLSGAPPSEGVSWGKIRAKADYVEIWADATLVFPLLVWKVMRS.

The active-site Nucleophile is the lysine 308.

Belongs to the deoxyhypusine synthase family. NAD(+) is required as a cofactor.

It carries out the reaction [eIF5A protein]-L-lysine + spermidine = [eIF5A protein]-deoxyhypusine + propane-1,3-diamine. It participates in protein modification; eIF5A hypusination. Its function is as follows. Catalyzes the NAD-dependent oxidative cleavage of spermidine and the subsequent transfer of the butylamine moiety of spermidine to the epsilon-amino group of a specific lysine residue of the eIF-5A precursor protein to form the intermediate deoxyhypusine residue. This Thermococcus gammatolerans (strain DSM 15229 / JCM 11827 / EJ3) protein is Probable deoxyhypusine synthase.